Reading from the N-terminus, the 342-residue chain is MSARPGLLARAEARLTREWQRRGALAWALTPFACAFGAIAALRRAAYARGWKARVDCGVPVVVVGNVTVGGTGKTPTVIALVDALRAAGFTPGVVSRGYGAKIVAPTAVTPASAPQQAGDEPLLIARRTLAPVWVCPDRVAAVRALKAAHPEVDVVVSDDGLQHYRLARAVEIVVFDHRLGGNGFLLPAGPLREPLSRRRDATLVNDPYSRALPPWPDTFALSLAPGDAWHLARPSRRKPLAQFAGERVLAAAGIGAPERFFATLRAAGVTPATRALPDHYAFATNPFVDDHFDAILITEKDAVKLGTSWRDARIWVVPVEAALDPRLIALVVEKLRGRTSA.

68-75 provides a ligand contact to ATP; sequence TVGGTGKT.

This sequence belongs to the LpxK family.

It catalyses the reaction a lipid A disaccharide + ATP = a lipid IVA + ADP + H(+). Its pathway is glycolipid biosynthesis; lipid IV(A) biosynthesis; lipid IV(A) from (3R)-3-hydroxytetradecanoyl-[acyl-carrier-protein] and UDP-N-acetyl-alpha-D-glucosamine: step 6/6. In terms of biological role, transfers the gamma-phosphate of ATP to the 4'-position of a tetraacyldisaccharide 1-phosphate intermediate (termed DS-1-P) to form tetraacyldisaccharide 1,4'-bis-phosphate (lipid IVA). The chain is Tetraacyldisaccharide 4'-kinase from Burkholderia thailandensis (strain ATCC 700388 / DSM 13276 / CCUG 48851 / CIP 106301 / E264).